We begin with the raw amino-acid sequence, 961 residues long: DNA repair endonuclease XPF (961 aa).

3 disordered regions span residues Met1–Thr27, Asn451–Ala485, and Pro674–Lys693. Over residues Thr13–Glu22 the composition is skewed to basic and acidic residues. A compositionally biased stretch (polar residues) spans Thr458–Asn469. One can recognise an ERCC4 domain in the interval Lys697 to Gln777.

Belongs to the XPF family. In terms of assembly, heterodimer. Interacts with hdm.

It is found in the nucleus. In terms of biological role, implicated in recombination events during meiosis, mostly in meiotic exchange. May directly resolve Holliday junctions within recombination intermediates leading to DNA exchange. Also required for the repair of mismatches within meiotic heteroduplex DNA and for nucleotide excision repair. The sequence is that of DNA repair endonuclease XPF (mei-9) from Drosophila melanogaster (Fruit fly).